The primary structure comprises 403 residues: Golgin-45 (403 aa).

Residues 1-63 (MEKMTTLKSS…PRKKVSSDSP (63 aa)) are disordered. A Tankyrase-binding motif motif is present at residues 22–26 (RGAGD). Position 53 is a phosphoserine (S53). A coiled-coil region spans residues 123–216 (RKELSEVKKV…QLERMSIQCD (94 aa)). S356 is subject to Phosphoserine. The segment at 397–403 (QGELIAL) is essential for interaction with GORASP2.

In terms of assembly, interacts with GORASP2. Interacts with the GTP-bound form of RAB2, but not with other Golgi Rab proteins. Identified in a complex with RAB2 and GORASP2. Post-translationally, ADP-ribosylated by tankyrase TNKS and TNKS2. Poly-ADP-ribosylated protein is recognized by RNF146, followed by ubiquitination. In terms of processing, ubiquitinated by RNF146 when poly-ADP-ribosylated, leading to its degradation.

It is found in the golgi apparatus membrane. Functionally, required for normal Golgi structure and for protein transport from the endoplasmic reticulum (ER) through the Golgi apparatus to the cell surface. This chain is Golgin-45 (Blzf1), found in Mus musculus (Mouse).